A 291-amino-acid polypeptide reads, in one-letter code: Pantothenate synthetase (291 aa).

Residue 30 to 37 (MGYLHVGH) coordinates ATP. His-37 serves as the catalytic Proton donor. Gln-61 contributes to the (R)-pantoate binding site. Residue Gln-61 participates in beta-alanine binding. ATP is bound at residue 147 to 150 (GEKD). Gln-153 contributes to the (R)-pantoate binding site. ATP contacts are provided by residues Val-176 and 184–187 (CSSR).

It belongs to the pantothenate synthetase family. In terms of assembly, homodimer.

It localises to the cytoplasm. It catalyses the reaction (R)-pantoate + beta-alanine + ATP = (R)-pantothenate + AMP + diphosphate + H(+). The protein operates within cofactor biosynthesis; (R)-pantothenate biosynthesis; (R)-pantothenate from (R)-pantoate and beta-alanine: step 1/1. Catalyzes the condensation of pantoate with beta-alanine in an ATP-dependent reaction via a pantoyl-adenylate intermediate. In Rhizobium meliloti (strain 1021) (Ensifer meliloti), this protein is Pantothenate synthetase.